The sequence spans 111 residues: uncharacterized protein (111 aa).

Positions Pro66 to Ser94 are disordered. Residues Ala70–Ala83 are compositionally biased toward polar residues.

The protein localises to the plastid. Its subcellular location is the chloroplast. This is an uncharacterized protein from Chlamydomonas reinhardtii (Chlamydomonas smithii).